Consider the following 111-residue polypeptide: Probable 4-amino-4-deoxy-L-arabinose-phosphoundecaprenol flippase subunit ArnE (111 aa).

Residues 1-35 (MIWLTLVFASLLSVAGQLCQKQATCFVAISKRRKH) are Cytoplasmic-facing. Residues 36–56 (IVLWLGLALACLGLAMVLWLL) form a helical membrane-spanning segment. One can recognise an EamA domain in the interval 40-109 (LGLALACLGL…IIGGIVILGS (70 aa)). At 57 to 60 (VLQN) the chain is on the periplasmic side. The helical transmembrane segment at 61–81 (VPVGIAYPMLSLNFVWVTLAA) threads the bilayer. Residues 82–87 (VKLWHE) are Cytoplasmic-facing. The helical transmembrane segment at 88-108 (PVSPRHWCGVAFIIGGIVILG) threads the bilayer. Topologically, residues 109–111 (STV) are periplasmic.

It belongs to the ArnE family. As to quaternary structure, heterodimer of ArnE and ArnF.

It is found in the cell inner membrane. Its pathway is bacterial outer membrane biogenesis; lipopolysaccharide biosynthesis. In terms of biological role, translocates 4-amino-4-deoxy-L-arabinose-phosphoundecaprenol (alpha-L-Ara4N-phosphoundecaprenol) from the cytoplasmic to the periplasmic side of the inner membrane. This Escherichia coli O157:H7 protein is Probable 4-amino-4-deoxy-L-arabinose-phosphoundecaprenol flippase subunit ArnE.